We begin with the raw amino-acid sequence, 243 residues long: Phosphoadenosine 5'-phosphosulfate reductase (243 aa).

Catalysis depends on C239, which acts as the Nucleophile; cysteine thiosulfonate intermediate.

This sequence belongs to the PAPS reductase family. CysH subfamily.

The protein resides in the cytoplasm. The catalysed reaction is [thioredoxin]-disulfide + sulfite + adenosine 3',5'-bisphosphate + 2 H(+) = [thioredoxin]-dithiol + 3'-phosphoadenylyl sulfate. The protein operates within sulfur metabolism; hydrogen sulfide biosynthesis; sulfite from sulfate: step 3/3. Functionally, catalyzes the formation of sulfite from phosphoadenosine 5'-phosphosulfate (PAPS) using thioredoxin as an electron donor. This Erwinia tasmaniensis (strain DSM 17950 / CFBP 7177 / CIP 109463 / NCPPB 4357 / Et1/99) protein is Phosphoadenosine 5'-phosphosulfate reductase.